The chain runs to 197 residues: Neurturin (197 aa).

Residues 1–19 (MQRWKAAALASVLCSSVLS) form the signal peptide. Positions 20–95 (IWMCREGLLL…RAGPRRRRAR (76 aa)) are excised as a propeptide. The tract at residues 74 to 93 (TPWAGRPPGPRRRAGPRRRR) is disordered. Residues 82–93 (GPRRRAGPRRRR) are compositionally biased toward basic residues. 3 disulfides stabilise this stretch: Cys-103–Cys-165, Cys-130–Cys-194, and Cys-134–Cys-196. Positions 149, 158, 160, and 162 each coordinate heparan sulfate group.

The protein belongs to the TGF-beta family. GDNF subfamily. As to quaternary structure, homodimer; disulfide-linked. Interacts with GFRA2 coreceptor and RET: forms a 2:2:2 ternary complex composed of NRTN ligand, GFRA2 and RET receptor. Also forms a 4:4:4 tetrameric complex composed of 4 copies of NRTN ligand, GFRA2 and RET receptor, which prevents endocytosis of RET.

It localises to the secreted. Its function is as follows. Growth factor that supports the survival of sympathetic neurons in culture. May regulate the development and maintenance of the CNS. Involved in the development of the neural crest. Might control the size of non-neuronal cell population such as haemopoietic cells. Acts by binding to its coreceptor, GFRA2, leading to autophosphorylation and activation of the RET receptor. Heparan sulfate-binding is required for signaling. The protein is Neurturin of Homo sapiens (Human).